The following is a 97-amino-acid chain: Aspartyl/glutamyl-tRNA(Asn/Gln) amidotransferase subunit C (97 aa).

This sequence belongs to the GatC family. In terms of assembly, heterotrimer of A, B and C subunits.

It carries out the reaction L-glutamyl-tRNA(Gln) + L-glutamine + ATP + H2O = L-glutaminyl-tRNA(Gln) + L-glutamate + ADP + phosphate + H(+). It catalyses the reaction L-aspartyl-tRNA(Asn) + L-glutamine + ATP + H2O = L-asparaginyl-tRNA(Asn) + L-glutamate + ADP + phosphate + 2 H(+). Its function is as follows. Allows the formation of correctly charged Asn-tRNA(Asn) or Gln-tRNA(Gln) through the transamidation of misacylated Asp-tRNA(Asn) or Glu-tRNA(Gln) in organisms which lack either or both of asparaginyl-tRNA or glutaminyl-tRNA synthetases. The reaction takes place in the presence of glutamine and ATP through an activated phospho-Asp-tRNA(Asn) or phospho-Glu-tRNA(Gln). In Synechococcus sp. (strain JA-3-3Ab) (Cyanobacteria bacterium Yellowstone A-Prime), this protein is Aspartyl/glutamyl-tRNA(Asn/Gln) amidotransferase subunit C.